Consider the following 360-residue polypeptide: Lipid-A-disaccharide synthase (360 aa).

It belongs to the LpxB family.

It carries out the reaction a lipid X + a UDP-2-N,3-O-bis[(3R)-3-hydroxyacyl]-alpha-D-glucosamine = a lipid A disaccharide + UDP + H(+). Its pathway is bacterial outer membrane biogenesis; LPS lipid A biosynthesis. Functionally, condensation of UDP-2,3-diacylglucosamine and 2,3-diacylglucosamine-1-phosphate to form lipid A disaccharide, a precursor of lipid A, a phosphorylated glycolipid that anchors the lipopolysaccharide to the outer membrane of the cell. This chain is Lipid-A-disaccharide synthase, found in Helicobacter pylori (strain HPAG1).